The chain runs to 516 residues: Gastrula zinc finger protein XlCGF53.1 (516 aa).

Disordered regions lie at residues 1–33 (MGMW…GKKE) and 200–220 (GNQS…TDKP). Residues 200–218 (GNQSDCSINPLTEQIQGTD) are compositionally biased toward polar residues. 7 consecutive C2H2-type zinc fingers follow at residues 312–334 (YICS…QKTH), 354–376 (FPCS…QSSH), 382–404 (YACS…LKLH), 410–432 (FPCS…RRVH), 438–460 (YSCS…QRTH), 466–488 (FSCT…HRTH), and 494–516 (FSCT…HRTH).

The protein belongs to the krueppel C2H2-type zinc-finger protein family.

It is found in the nucleus. Its function is as follows. May be involved in transcriptional regulation. This Xenopus laevis (African clawed frog) protein is Gastrula zinc finger protein XlCGF53.1.